We begin with the raw amino-acid sequence, 224 residues long: Prolactin-3D1 (224 aa).

The first 29 residues, 1–29, serve as a signal peptide directing secretion; sequence MQLTLNLSGSAGMQLLLLVSSLLLWENVS. Cystine bridges form between cysteine 81/cysteine 199 and cysteine 216/cysteine 224. 2 N-linked (GlcNAc...) asparagine glycosylation sites follow: asparagine 109 and asparagine 158.

It belongs to the somatotropin/prolactin family.

The protein resides in the secreted. The chain is Prolactin-3D1 (Prl3d1) from Mus musculus (Mouse).